The chain runs to 258 residues: Fibroblast growth factor-binding protein 3 (258 aa).

A signal peptide spans 1 to 26 (MTPPKLRASLSPSLLLLLSGCLLAAA). Disulfide bonds link Cys-59–Cys-80 and Cys-90–Cys-124. The interval 146–231 (RLVPRASPPA…GTGPDPDGLD (86 aa)) is disordered. Residues 186–197 (GTPPPQSAPPKE) are compositionally biased toward pro residues. Positions 198–209 (NPSERKTNEGKR) are enriched in basic and acidic residues. Cys-241 and Cys-249 are oxidised to a cystine.

The protein belongs to the fibroblast growth factor-binding protein family. Interacts with FGF2.

It is found in the secreted. In terms of biological role, heparin-binding protein which binds to FGF2, prevents binding of FGF2 to heparin and probably inhibits immobilization of FGF2 on extracellular matrix glycosaminoglycans, allowing its release and subsequent activation of FGFR signaling which leads to increased vascular permeability. The chain is Fibroblast growth factor-binding protein 3 (FGFBP3) from Homo sapiens (Human).